The sequence spans 322 residues: Endochitinase (322 aa).

Residues 1-21 (MKMRYCVLVSVLAILVIRGSA) form the signal peptide. The region spanning 22-62 (ENCGRQAGGALCPGGQCCSKWGWCGTTPDHCGTDCQSQCGG) is the Chitin-binding type-1 domain. 4 cysteine pairs are disulfide-bonded: Cys24-Cys39, Cys33-Cys45, Cys38-Cys52, and Cys56-Cys60.

The protein belongs to the glycosyl hydrolase 19 family. Chitinase class I subfamily.

It carries out the reaction Random endo-hydrolysis of N-acetyl-beta-D-glucosaminide (1-&gt;4)-beta-linkages in chitin and chitodextrins.. Defense against chitin-containing fungal pathogens. The protein is Endochitinase of Actinidia chinensis var. chinensis (Chinese soft-hair kiwi).